A 357-amino-acid chain; its full sequence is MERGAGASEKGTVLVTGASGFVGSWLVMKLLQAGYTVRATVRDPANVGKTKPLMDLPGATERLSIWKADLAEEGSFHDAIRGCTGVFHVATPMDFLSKDPENEVIKPTVEGMISIMRACKEAGTVRRIVFTSSAGTVNLEERQRPVYDEESWTDVDFCRRVKMTGWMYFVSKTLAEKAALAYAAEHGLDLVTIIPTLVVGPFISASMPPSLITALALITGNAPHYSILKQVQLIHLDDLCDAEIFLFENPAAAGRYVCSSHDVTIHGLAAMLRDRYPEYDVPQRFPGIQDDLQPVRFSSKKLQDLGFTFRYKTLEDMFDAAIRTCQEKGLIPLATAAGGDGFASVRAPGETEATIGA.

Lys49 and Tyr168 together coordinate NADP(+).

The protein belongs to the NAD(P)-dependent epimerase/dehydratase family. Dihydroflavonol-4-reductase subfamily.

The catalysed reaction is a (2R,3S,4S)-leucoanthocyanidin + NADP(+) = a (2R,3R)-dihydroflavonol + NADPH + H(+). It catalyses the reaction (2S)-flavan-4-ol + NADP(+) = (2S)-flavanone + NADPH + H(+). It functions in the pathway pigment biosynthesis; anthocyanin biosynthesis. Its function is as follows. Bifunctional enzyme involved in flavonoid metabolism. In Zea mays (Maize), this protein is Dihydroflavonol 4-reductase (A1).